Consider the following 348-residue polypeptide: UDP-3-O-acylglucosamine N-acyltransferase (348 aa).

Residue His248 is the Proton acceptor of the active site.

It belongs to the transferase hexapeptide repeat family. LpxD subfamily. Homotrimer.

The enzyme catalyses a UDP-3-O-[(3R)-3-hydroxyacyl]-alpha-D-glucosamine + a (3R)-hydroxyacyl-[ACP] = a UDP-2-N,3-O-bis[(3R)-3-hydroxyacyl]-alpha-D-glucosamine + holo-[ACP] + H(+). The protein operates within bacterial outer membrane biogenesis; LPS lipid A biosynthesis. In terms of biological role, catalyzes the N-acylation of UDP-3-O-acylglucosamine using 3-hydroxyacyl-ACP as the acyl donor. Is involved in the biosynthesis of lipid A, a phosphorylated glycolipid that anchors the lipopolysaccharide to the outer membrane of the cell. The protein is UDP-3-O-acylglucosamine N-acyltransferase of Rippkaea orientalis (strain PCC 8801 / RF-1) (Cyanothece sp. (strain PCC 8801)).